The chain runs to 224 residues: MNLKNKSIVVLLSGGLDSSTVTGIAKKSEAKIFGLSFDYGQRHKKELNSASIIAKHFDIEEFKIIKLDLSLWGGSSLTDSQKNIPIEGVQANKIPNTYVPGRNTIFISVALSYAEAIDADFIGLGVNALDYSGYPDCRPDYIKKFQELADLANKRGRENNPIKLWTPLLDLNKEEIIKLAFDNHVPFDKTWSCYSGNSKPCGKCDSCRIRNAAYEKWLNNKNKK.

ATP is bound at residue 12-22 (LSGGLDSSTVT). Zn(2+)-binding residues include C193, C201, C204, and C207.

The protein belongs to the QueC family. The cofactor is Zn(2+).

It catalyses the reaction 7-carboxy-7-deazaguanine + NH4(+) + ATP = 7-cyano-7-deazaguanine + ADP + phosphate + H2O + H(+). Its pathway is purine metabolism; 7-cyano-7-deazaguanine biosynthesis. Functionally, catalyzes the ATP-dependent conversion of 7-carboxy-7-deazaguanine (CDG) to 7-cyano-7-deazaguanine (preQ(0)). The sequence is that of 7-cyano-7-deazaguanine synthase from Prochlorococcus marinus (strain MIT 9301).